The primary structure comprises 101 residues: UPF0235 protein Maeo_0841 (101 aa).

The protein belongs to the UPF0235 family.

In Methanococcus aeolicus (strain ATCC BAA-1280 / DSM 17508 / OCM 812 / Nankai-3), this protein is UPF0235 protein Maeo_0841.